The sequence spans 109 residues: Major allergen I polypeptide chain 2 (109 aa).

Positions 1–17 are cleaved as a signal peptide; the sequence is MRGALLVLALLVTQALG. Residue N50 is glycosylated (N-linked (GlcNAc...) asparagine).

This sequence belongs to the secretoglobin family. Heterotetramer composed of two non-covalently linked disulfide-linked heterodimer of chains 1 and 2. As to expression, the long form is preferentially expressed in the salivary gland, while the short form is preferentially expressed in the skin.

It is found in the secreted. The protein is Major allergen I polypeptide chain 2 (CH2) of Felis catus (Cat).